The chain runs to 634 residues: Coilin (634 aa).

Disordered regions lie at residues 87-135, 149-276, and 342-361; these read VSPA…IAEN, PGPS…KLSQ, and GAKSDDTAKQFPSNGKDSTL. Residues 152 to 181 show a composition bias toward polar residues; it reads SVQSKLLTNKGTPKAPETQTEVSNMSANIE. 2 stretches are compositionally biased toward basic and acidic residues: residues 223-234 and 251-272; these read TLKEGKMSESKN and KENETREEQQDKTHLESNKIPD.

Belongs to the coilin family. As to expression, in egg chambers expressed in the follicle cells, nurse cells and oocyte. Expressed in the larval brain, salivary glands, fat bodies and in the somatic hub cells at the tip of the testis. Expressed in the spermatogonia and spermatocytes, and in the adult ejaculatory duct (at protein level). Expressed in the adult Malpighian tubules.

Its subcellular location is the nucleus. It localises to the nucleoplasm. The protein resides in the cajal body. It is found in the chromosome. The protein localises to the centromere. Its subcellular location is the cytoplasm. It localises to the cytoskeleton. The protein resides in the spindle. In terms of biological role, component of nuclear coiled bodies, also known as Cajal bodies or CBs, which are involved in the modification and assembly of nucleoplasmic snRNPs. Required for Cajal body formation. In Drosophila melanogaster (Fruit fly), this protein is Coilin.